The sequence spans 556 residues: Phenylalanine--tRNA ligase beta subunit (556 aa).

A B5 domain is found at 269-345 (MEPEEVVYDV…MGYGYERIEP (77 aa)). Residues Asp323, Asp329, Glu332, and Glu333 each contribute to the Mg(2+) site.

The protein belongs to the phenylalanyl-tRNA synthetase beta subunit family. Type 2 subfamily. Tetramer of two alpha and two beta subunits. Requires Mg(2+) as cofactor.

The protein resides in the cytoplasm. The catalysed reaction is tRNA(Phe) + L-phenylalanine + ATP = L-phenylalanyl-tRNA(Phe) + AMP + diphosphate + H(+). In Thermofilum pendens (strain DSM 2475 / Hrk 5), this protein is Phenylalanine--tRNA ligase beta subunit.